The chain runs to 401 residues: Adaptive-response sensory kinase SasA (401 aa).

The Histidine kinase domain maps to 175–400; the sequence is MLVHDLRNPL…WFHFTLPVYP (226 aa). Residue His178 is modified to Phosphohistidine; by autocatalysis.

In terms of assembly, homooligomerizes. Interacts with KaiC. Participates in the KaiABC clock complex, whose core is composed of a KaiC homohexamer, 6 KaiB and up to 6 KaiA dimers. SasA and KaiB(fs) compete to bind to KaiC.

It carries out the reaction ATP + protein L-histidine = ADP + protein N-phospho-L-histidine.. Member of the two-component regulatory system SasA/RpaA involved in genome-wide circadian gene expression. One of several clock output pathways. Participates in the Kai clock protein complex, the main circadian regulator in cyanobacteria, via its interaction with KaiC. KaiC enhances the autophosphorylation activity of SasA, which then transfers its phosphate group to RpaA to activate it. In addition to its output function, recruits fold-shifted KaiB (KaiB(fs)) to KaiC to cooperatively form the KaiB(6):KaiC(6) complex (independent of SasA kinase activity). Required for robustness of the circadian rhythm of gene expression and is involved in clock output, also required for adaptation to light/dark cycles. This Nostoc sp. (strain PCC 7120 / SAG 25.82 / UTEX 2576) protein is Adaptive-response sensory kinase SasA.